A 1004-amino-acid polypeptide reads, in one-letter code: Protein phosphatase 1 regulatory subunit 12A (1004 aa).

The tract at residues 35–38 (KVKF) is important for interaction with PPP1CB. 6 ANK repeats span residues 39 to 68 (DDGA…DINY), 72 to 101 (DGLT…NINQ), 105 to 134 (EGWI…HVGA), 138 to 164 (EGDT…RQGV), 198 to 227 (SGGT…DVNI), and 231 to 260 (DGWT…DMEA). A compositionally biased stretch (basic and acidic residues) spans 291–300 (HSEKREKKSP). The segment at 291-920 (HSEKREKKSP…SYLEDRKPYC (630 aa)) is disordered. Over residues 302–316 (IESTANLDNNQTQKT) the composition is skewed to polar residues. Basic and acidic residues-rich tracts occupy residues 318 to 329 (KNKETLIMEQEK) and 336 to 353 (SLEH…KDES). The segment covering 357 to 369 (SEEEEDDDSESEA) has biased composition (acidic residues). Polar residues predominate over residues 378 to 392 (ANANTTSTQSASMTA). The span at 417 to 427 (SPKEEERKDES) shows a compositional bias: basic and acidic residues. Positions 464-475 (RSASSPRLSSSL) are enriched in low complexity. Basic and acidic residues predominate over residues 476 to 486 (DNKEKEKDGKG). Residues 514 to 525 (SSASSIRSGSSY) show a composition bias toward low complexity. The segment covering 528–538 (RKWEEDVKKNS) has biased composition (basic and acidic residues). Over residues 539 to 554 (LNEGPTSLNTSYQRSG) the composition is skewed to polar residues. Low complexity-rich tracts occupy residues 564–578 (VSSN…VTSS) and 587–602 (ASAN…STSA). The span at 613–624 (WAEDSTEKEKDS) shows a compositional bias: basic and acidic residues. The segment covering 625–659 (VPTAVTVPVAPSVVNAAATTTAMTTATSGTVSSTS) has biased composition (low complexity). Basic and acidic residues predominate over residues 672-681 (VRDEESESQR). The span at 682 to 692 (KARSRQARQSR) shows a compositional bias: basic residues. Threonine 695 is subject to Phosphothreonine; by ROCK2. Residues 717 to 765 (RTREQENEEKEKEEKEKQDKEKQEEKKESETKDDDYRQRYSRTVEEPYH) are compositionally biased toward basic and acidic residues. A compositionally biased stretch (low complexity) spans 770–793 (TSTSTSTSSTSSLSTSTSSLSSSS). Residues 794-808 (QLNRPNSLIGITSAY) are compositionally biased toward polar residues. The segment covering 812–837 (GTKESEREGGKKEEEKEEDKSQPKSI) has biased composition (basic and acidic residues). Basic residues predominate over residues 838–849 (RERRRPREKRRS). Threonine 850 is modified (phosphothreonine; by ROCK2). Residues 864–880 (QEHQSDSEEGTNKKETQ) show a composition bias toward basic and acidic residues. Positions 881–896 (SDSLSRYDTGSLSVSS) are enriched in polar residues.

In terms of assembly, PP1 comprises a catalytic subunit, PPP1CA, PPP1CB or PPP1CC, and one or several targeting or regulatory subunits. PPP1R12A mediates binding to myosin. Post-translationally, phosphorylated by CIT (Rho-associated kinase) and by ROCK2 on serine and threonine residues. Phosphorylation at Thr-695 leads to inhibition of myosin phosphatase activity. Phosphorylation at Thr-850 abolishes myosin binding. May be phosphorylated at Thr-695 by DMPK; may inhibit the myosin phosphatase activity. Detected in brain, lung, aorta, heart, gizzard, stomach, oviduct, spleen, kidney and small intestine.

Its subcellular location is the cytoplasm. The protein localises to the cytoskeleton. It localises to the stress fiber. In terms of biological role, regulates myosin phosphatase activity. The polypeptide is Protein phosphatase 1 regulatory subunit 12A (PPP1R12A) (Gallus gallus (Chicken)).